A 106-amino-acid polypeptide reads, in one-letter code: uncharacterized protein (106 aa).

This is an uncharacterized protein from Rhodococcus erythropolis (Arthrobacter picolinophilus).